The following is a 210-amino-acid chain: Large ribosomal subunit protein bL17 (210 aa).

A disordered region spans residues 177-210 (TRSAQRPAFEQDAPESDSAPEAEAKTEEETASAN).

This sequence belongs to the bacterial ribosomal protein bL17 family. In terms of assembly, part of the 50S ribosomal subunit. Contacts protein L32.

In Rhodopirellula baltica (strain DSM 10527 / NCIMB 13988 / SH1), this protein is Large ribosomal subunit protein bL17.